A 390-amino-acid polypeptide reads, in one-letter code: COP9/Signalosome and eIF3 complex-shared subunit 1 (390 aa).

The PCI domain occupies 188–351 (QAAKVMTALL…RTLIVSSYQH (164 aa)).

This sequence belongs to the eIF-3 subunit M family. Component of the eukaryotic translation initiation factor 3 (eIF-3) complex. Within the eIF-3 complex, interacts directly with eif-3.F. Component of the CSN complex, composed of csn-1, csn-2, csn-3, csn-4, csn-5, csn-6 and csn-7. Within the CSN complex, interacts directly with csn-1 and csn-4.

The protein localises to the cytoplasm. In terms of biological role, component of the eukaryotic translation initiation factor 3 (eIF-3) complex, which is involved in protein synthesis of a specialized repertoire of mRNAs and, together with other initiation factors, stimulates binding of mRNA and methionyl-tRNAi to the 40S ribosome. The eIF-3 complex specifically targets and initiates translation of a subset of mRNAs involved in cell proliferation (Potential). Component of the COP9 signalosome complex (CSN), a complex involved in various cellular and developmental processes. The CSN complex is an essential regulator of the ubiquitin (Ubl) conjugation pathway by mediating the deneddylation of the cullin subunits of the SCF-type E3 ligase complexes, leading to decrease the Ubl ligase activity of SCF. The CSN complex plays an essential role in embryogenesis and oogenesis and is required to regulate microtubule stability in the early embryo. Mediates mei-1 targeting for degradation at the meiosis to mitosis transition via deneddylation of cul-3. The polypeptide is COP9/Signalosome and eIF3 complex-shared subunit 1 (Caenorhabditis elegans).